We begin with the raw amino-acid sequence, 142 residues long: Putative mating-type transcription factor (142 aa).

The protein localises to the nucleus. The sequence is that of Putative mating-type transcription factor from Eremothecium gossypii (strain ATCC 10895 / CBS 109.51 / FGSC 9923 / NRRL Y-1056) (Yeast).